A 498-amino-acid chain; its full sequence is Archaemetzincin-1 (498 aa).

H261 serves as a coordination point for Zn(2+). Residue E262 is the Proton acceptor of the active site. H265, C272, C277, C296, and C299 together coordinate Zn(2+). Residues Q332–P381 are disordered.

The protein belongs to the peptidase M54 family. It depends on Zn(2+) as a cofactor.

In terms of biological role, probable zinc metalloprotease. The polypeptide is Archaemetzincin-1 (AMZ1) (Homo sapiens (Human)).